The primary structure comprises 198 residues: Peptidyl-tRNA hydrolase (198 aa).

TRNA is bound at residue Tyr15. His20 functions as the Proton acceptor in the catalytic mechanism. TRNA-binding residues include Phe65, Asn67, and Asn113.

It belongs to the PTH family. In terms of assembly, monomer.

The protein localises to the cytoplasm. It catalyses the reaction an N-acyl-L-alpha-aminoacyl-tRNA + H2O = an N-acyl-L-amino acid + a tRNA + H(+). Hydrolyzes ribosome-free peptidyl-tRNAs (with 1 or more amino acids incorporated), which drop off the ribosome during protein synthesis, or as a result of ribosome stalling. Its function is as follows. Catalyzes the release of premature peptidyl moieties from peptidyl-tRNA molecules trapped in stalled 50S ribosomal subunits, and thus maintains levels of free tRNAs and 50S ribosomes. This is Peptidyl-tRNA hydrolase from Ehrlichia chaffeensis (strain ATCC CRL-10679 / Arkansas).